A 284-amino-acid chain; its full sequence is Bifunctional protein FolD (284 aa).

NADP(+) contacts are provided by residues 165-167 (GRS), serine 190, and isoleucine 231.

This sequence belongs to the tetrahydrofolate dehydrogenase/cyclohydrolase family. Homodimer.

The enzyme catalyses (6R)-5,10-methylene-5,6,7,8-tetrahydrofolate + NADP(+) = (6R)-5,10-methenyltetrahydrofolate + NADPH. The catalysed reaction is (6R)-5,10-methenyltetrahydrofolate + H2O = (6R)-10-formyltetrahydrofolate + H(+). It participates in one-carbon metabolism; tetrahydrofolate interconversion. In terms of biological role, catalyzes the oxidation of 5,10-methylenetetrahydrofolate to 5,10-methenyltetrahydrofolate and then the hydrolysis of 5,10-methenyltetrahydrofolate to 10-formyltetrahydrofolate. The sequence is that of Bifunctional protein FolD from Streptococcus thermophilus (strain CNRZ 1066).